Consider the following 371-residue polypeptide: MEEYYMNTAIELARRGEGQTQPNPLVGAVVVKKRQIVGMGAHLQYGEAHAEVHAINMAGSLAKGADLYVTLEPCSHYGKTPPCAELIMKSGIKRVFIAVEDPNPLVAGKGITMLEEAGIEVKTGLLRQQAEELNKMFLHFMRTGLPYVTLKAAASLDGKTATETGDSKWITSEAARLDAQQYRKSHQRILVGAGTVKADNPSLTCRLPDAVKQPVRVILDTKLTVPETANVLTDGAAPTWIFTAAGSDVRKKDRLTALGIKVFTLETDRIHIPEVLSILAENGIMSVYVEGGASVHGSFVKAGCFDELHFYFAPILIGGTLAPSLISGEGFQSMKDVPHLQFTQITQIGPDIKLTAIPKDGKDGDDVYRNR.

Residues 1–122 (MEEYYMNTAI…MLEEAGIEVK (122 aa)) form the CMP/dCMP-type deaminase domain. Residues 1 to 144 (MEEYYMNTAI…KMFLHFMRTG (144 aa)) are deaminase. Zn(2+) is bound at residue histidine 49. Glutamate 51 acts as the Proton donor in catalysis. Residues cysteine 74 and cysteine 83 each coordinate Zn(2+). The segment at 145–371 (LPYVTLKAAA…KDGDDVYRNR (227 aa)) is reductase. Residue alanine 153 coordinates NADP(+). Substrate is bound at residue serine 167. Tryptophan 169 contacts NADP(+). Arginine 183 is a binding site for substrate. Residues threonine 195 and aspartate 199 each coordinate NADP(+). Positions 203 and 206 each coordinate substrate. An NADP(+)-binding site is contributed by threonine 221. Glutamate 290 provides a ligand contact to substrate. 292–298 (GASVHGS) serves as a coordination point for NADP(+).

It in the N-terminal section; belongs to the cytidine and deoxycytidylate deaminase family. This sequence in the C-terminal section; belongs to the HTP reductase family. Zn(2+) is required as a cofactor.

The enzyme catalyses 2,5-diamino-6-hydroxy-4-(5-phosphoribosylamino)-pyrimidine + H2O + H(+) = 5-amino-6-(5-phospho-D-ribosylamino)uracil + NH4(+). It carries out the reaction 5-amino-6-(5-phospho-D-ribitylamino)uracil + NADP(+) = 5-amino-6-(5-phospho-D-ribosylamino)uracil + NADPH + H(+). It participates in cofactor biosynthesis; riboflavin biosynthesis; 5-amino-6-(D-ribitylamino)uracil from GTP: step 2/4. It functions in the pathway cofactor biosynthesis; riboflavin biosynthesis; 5-amino-6-(D-ribitylamino)uracil from GTP: step 3/4. Its function is as follows. Converts 2,5-diamino-6-(ribosylamino)-4(3h)-pyrimidinone 5'-phosphate into 5-amino-6-(ribosylamino)-2,4(1h,3h)-pyrimidinedione 5'-phosphate. In Bacillus amyloliquefaciens (Bacillus velezensis), this protein is Riboflavin biosynthesis protein RibD (ribD).